The primary structure comprises 924 residues: DNA polymerase (924 aa).

The 152-residue stretch at 235 to 386 folds into the 3'-5' exonuclease domain; sequence YPMSQQPKIV…DDCDVTFRLS (152 aa).

It belongs to the DNA polymerase type-A family.

It catalyses the reaction DNA(n) + a 2'-deoxyribonucleoside 5'-triphosphate = DNA(n+1) + diphosphate. Replicates viral genomic DNA. This polymerase possesses two enzymatic activities: DNA synthesis (polymerase) and an exonucleolytic activity that degrades single-stranded DNA in the 3'-5' direction. This chain is DNA polymerase (31), found in Bacillus phage SP01 (Bacteriophage SP01).